The sequence spans 259 residues: Phosphatidylglycerol--prolipoprotein diacylglyceryl transferase (259 aa).

Transmembrane regions (helical) follow at residues 12–32 (LAIHWYALCILSGLVLAVYLA), 41–61 (ISSDAIFDFILIAFPLAIVGA), 80–100 (IIAIWNGGIAIYGGLITGALV), and 109–129 (VLNPIHFLDIAAPSVMVAQAI). Arg-131 lines the a 1,2-diacyl-sn-glycero-3-phospho-(1'-sn-glycerol) pocket. Transmembrane regions (helical) follow at residues 167-187 (IPTFLYESLWNLLGFVIIMMW), 194-214 (LLDGEIFAFYLIWYGSGRLVI), and 226-246 (GIRISQYVSALLIIIGLIFVI).

It belongs to the Lgt family.

Its subcellular location is the cell membrane. It carries out the reaction L-cysteinyl-[prolipoprotein] + a 1,2-diacyl-sn-glycero-3-phospho-(1'-sn-glycerol) = an S-1,2-diacyl-sn-glyceryl-L-cysteinyl-[prolipoprotein] + sn-glycerol 1-phosphate + H(+). It functions in the pathway protein modification; lipoprotein biosynthesis (diacylglyceryl transfer). Catalyzes the transfer of the diacylglyceryl group from phosphatidylglycerol to the sulfhydryl group of the N-terminal cysteine of a prolipoprotein, the first step in the formation of mature lipoproteins. The polypeptide is Phosphatidylglycerol--prolipoprotein diacylglyceryl transferase (Streptococcus pyogenes serotype M49 (strain NZ131)).